Here is a 284-residue protein sequence, read N- to C-terminus: MTAQNIDGKAIAQSIRTQLKDKVTARKEAGKRVPGLAVILVGADPASQVYVGSKRKACEEVGFISRSYDLDSSTSEDALLSLIDECNEDPTIDGILVQLPLPEHIEESKVIERIRPDKDVDGFHPYNVGRLAQRIPVLRSCTPMGIMTLLKSTGVDTFGLDAVVVGASNIVGRPMSLELLLAGCTTTTCHRFTRNLEDKVRSADLVVVAVGKPGFIPGDWIKPGAIVIDVGINRLESGQLVGDVEFDVASQHASFITPVPGGVGPMTIASLLENTLYACEQYHD.

NADP(+) contacts are provided by residues 166 to 168 (GAS) and Ile-232.

It belongs to the tetrahydrofolate dehydrogenase/cyclohydrolase family. In terms of assembly, homodimer.

It carries out the reaction (6R)-5,10-methylene-5,6,7,8-tetrahydrofolate + NADP(+) = (6R)-5,10-methenyltetrahydrofolate + NADPH. It catalyses the reaction (6R)-5,10-methenyltetrahydrofolate + H2O = (6R)-10-formyltetrahydrofolate + H(+). It participates in one-carbon metabolism; tetrahydrofolate interconversion. Catalyzes the oxidation of 5,10-methylenetetrahydrofolate to 5,10-methenyltetrahydrofolate and then the hydrolysis of 5,10-methenyltetrahydrofolate to 10-formyltetrahydrofolate. The protein is Bifunctional protein FolD of Shewanella pealeana (strain ATCC 700345 / ANG-SQ1).